The chain runs to 348 residues: Protein pelota homolog (348 aa).

It belongs to the eukaryotic release factor 1 family. Pelota subfamily. As to quaternary structure, monomer. A divalent metal cation is required as a cofactor.

The protein localises to the cytoplasm. In terms of biological role, may function in recognizing stalled ribosomes, interact with stem-loop structures in stalled mRNA molecules, and effect endonucleolytic cleavage of the mRNA. May play a role in the release non-functional ribosomes and degradation of damaged mRNAs. Has endoribonuclease activity. The chain is Protein pelota homolog from Methanococcus vannielii (strain ATCC 35089 / DSM 1224 / JCM 13029 / OCM 148 / SB).